The sequence spans 419 residues: Pyrophosphate--fructose 6-phosphate 1-phosphotransferase (419 aa).

A diphosphate-binding site is contributed by glycine 13. Substrate-binding positions include 142-144 (TVD), 190-192 (MGR), glutamate 247, and 297-300 (YLQR). Residue aspartate 144 is the Proton acceptor of the active site.

The protein belongs to the phosphofructokinase type A (PFKA) family. PPi-dependent PFK group II subfamily. Clade 'B2' sub-subfamily. Homodimer. The cofactor is Mg(2+).

It localises to the cytoplasm. It catalyses the reaction beta-D-fructose 6-phosphate + diphosphate = beta-D-fructose 1,6-bisphosphate + phosphate + H(+). The protein operates within carbohydrate degradation; glycolysis; D-glyceraldehyde 3-phosphate and glycerone phosphate from D-glucose: step 3/4. Its activity is regulated as follows. Non-allosteric. Catalyzes the phosphorylation of D-fructose 6-phosphate, the first committing step of glycolysis. Uses inorganic phosphate (PPi) as phosphoryl donor instead of ATP like common ATP-dependent phosphofructokinases (ATP-PFKs), which renders the reaction reversible, and can thus function both in glycolysis and gluconeogenesis. Consistently, PPi-PFK can replace the enzymes of both the forward (ATP-PFK) and reverse (fructose-bisphosphatase (FBPase)) reactions. The polypeptide is Pyrophosphate--fructose 6-phosphate 1-phosphotransferase (Halomonas elongata (strain ATCC 33173 / DSM 2581 / NBRC 15536 / NCIMB 2198 / 1H9)).